A 292-amino-acid polypeptide reads, in one-letter code: 1D-myo-inositol 2-acetamido-2-deoxy-alpha-D-glucopyranoside deacetylase (292 aa).

The Zn(2+) site is built by H12, D15, and H147.

This sequence belongs to the MshB deacetylase family. Zn(2+) is required as a cofactor.

The enzyme catalyses 1D-myo-inositol 2-acetamido-2-deoxy-alpha-D-glucopyranoside + H2O = 1D-myo-inositol 2-amino-2-deoxy-alpha-D-glucopyranoside + acetate. Functionally, catalyzes the deacetylation of 1D-myo-inositol 2-acetamido-2-deoxy-alpha-D-glucopyranoside (GlcNAc-Ins) in the mycothiol biosynthesis pathway. The sequence is that of 1D-myo-inositol 2-acetamido-2-deoxy-alpha-D-glucopyranoside deacetylase from Rhodococcus jostii (strain RHA1).